Reading from the N-terminus, the 314-residue chain is Porphobilinogen deaminase (314 aa).

Residue Cys-234 is modified to S-(dipyrrolylmethanemethyl)cysteine.

The protein belongs to the HMBS family. Monomer. Requires dipyrromethane as cofactor.

It catalyses the reaction 4 porphobilinogen + H2O = hydroxymethylbilane + 4 NH4(+). The protein operates within porphyrin-containing compound metabolism; protoporphyrin-IX biosynthesis; coproporphyrinogen-III from 5-aminolevulinate: step 2/4. Functionally, tetrapolymerization of the monopyrrole PBG into the hydroxymethylbilane pre-uroporphyrinogen in several discrete steps. In Mycobacterium marinum (strain ATCC BAA-535 / M), this protein is Porphobilinogen deaminase.